A 277-amino-acid polypeptide reads, in one-letter code: Inositol monophosphatase 1 (277 aa).

4 residues coordinate Mg(2+): glutamate 70, aspartate 90, isoleucine 92, and aspartate 93. Glutamate 70 is a binding site for substrate. 92-95 (IDGT) is a substrate binding site. Phosphothreonine is present on threonine 168. Residues 194-196 (GTA), glutamate 213, and aspartate 220 contribute to the substrate site. Aspartate 220 is a binding site for Mg(2+).

It belongs to the inositol monophosphatase superfamily. Homodimer. Mg(2+) serves as cofactor.

It localises to the cytoplasm. It carries out the reaction a myo-inositol phosphate + H2O = myo-inositol + phosphate. It catalyses the reaction 1D-myo-inositol 1-phosphate + H2O = myo-inositol + phosphate. The catalysed reaction is 1D-myo-inositol 2-phosphate + H2O = myo-inositol + phosphate. The enzyme catalyses 1D-myo-inositol 3-phosphate + H2O = myo-inositol + phosphate. It carries out the reaction 1D-myo-inositol 4-phosphate + H2O = myo-inositol + phosphate. It catalyses the reaction 1D-myo-inositol 5-phosphate + H2O = myo-inositol + phosphate. The catalysed reaction is 1D-myo-inositol 6-phosphate + H2O = myo-inositol + phosphate. The enzyme catalyses scyllo-inositol 1-phosphate + H2O = scyllo-inositol + phosphate. It carries out the reaction alpha-D-galactose 1-phosphate + H2O = D-galactose + phosphate. It catalyses the reaction alpha-D-glucose 1-phosphate + H2O = D-glucose + phosphate. The catalysed reaction is D-glucose 6-phosphate + H2O = D-glucose + phosphate. The enzyme catalyses beta-D-fructose 1-phosphate + H2O = D-fructose + phosphate. It carries out the reaction glycerol 2-phosphate + H2O = glycerol + phosphate. It catalyses the reaction adenosine 2'-phosphate + H2O = adenosine + phosphate. It participates in polyol metabolism; myo-inositol biosynthesis; myo-inositol from D-glucose 6-phosphate: step 2/2. Activity with myo-inositol monophosphates and D-galactose 1-phosphate is inhibited by Li(+), Ca(2+) and Mn(2+), but also by Mg(2+) at concentrations above 3 mM. In terms of biological role, phosphatase involved in the dephosphorylation of myo-inositol monophosphates to generate myo-inositol. Is also able to dephosphorylate scyllo-inositol-phosphate, myo-inositol 1,4-diphosphate, scyllo-inositol-1,3-diphosphate and scyllo-inositol-1,4-diphosphate. Also dephosphorylates in vitro other sugar-phosphates including D-galactose-1-phosphate, glucose-1-phosphate, glucose-6-phosphate, fructose-1-phosphate, beta-glycerophosphate and 2'-AMP. Responsible for the provision of inositol required for synthesis of phosphatidylinositols and polyphosphoinositides, and involved in maintaining normal brain function. Has been implicated as the pharmacological target for lithium (Li(+)) action in brain, which is used to treat bipolar affective disorder. Is equally active with 1D-myo-inositol 1-phosphate, 1D-myo-inositol 3-phosphate and D-galactose 1-phosphate. This Homo sapiens (Human) protein is Inositol monophosphatase 1.